A 175-amino-acid chain; its full sequence is Co-chaperone protein HscB homolog (175 aa).

Residues Ser7–Leu79 form the J domain.

Belongs to the HscB family. As to quaternary structure, interacts with HscA and stimulates its ATPase activity.

Co-chaperone involved in the maturation of iron-sulfur cluster-containing proteins. Seems to help targeting proteins to be folded toward HscA. The chain is Co-chaperone protein HscB homolog from Burkholderia vietnamiensis (strain G4 / LMG 22486) (Burkholderia cepacia (strain R1808)).